Reading from the N-terminus, the 477-residue chain is Oleate hydroxylase FAH12 (477 aa).

Residues 26–48 (YESSAAVSPAESPRTSASSTSLS) are disordered. Low complexity predominate over residues 27–48 (ESSAAVSPAESPRTSASSTSLS). 2 helical membrane passes run 101 to 118 (AYVL…YLFH) and 133 to 153 (FVLW…LWVI). The Histidine box-1 motif lies at 155-159 (HECGH). A helical transmembrane segment spans residues 167–187 (FISDLTGWVIHSALLVPYFSW). Positions 191–195 (HSAHH) match the Histidine box-2 motif. The next 3 membrane-spanning stretches (helical) occupy residues 234–254 (PIYT…SYLM), 299–319 (YIVL…YLGN), and 327–347 (AVWY…ITFL).

Belongs to the fatty acid desaturase type 1 family.

It is found in the microsome membrane. The enzyme catalyses (9Z)-octadecenoate + AH2 + O2 = (12R)-hydroxy-(9Z)-octadecenoate + A + H2O. The protein operates within lipid metabolism; monounsaturated fatty acid biosynthesis. Oleate hydroxylase involved in the biosynthesis of ricinoleate (12-hydroxy-cis-9-octadecenoate), that is present at high levels in C.purpurea sclerotium tissue. Exhibits delta(12) hydroxylase activity on 16C and 18C monounsaturated fatty acids (i.e. oleic and palmitoleic acids), and, to a lower extent, gamma(3) hydroxylase activity on ricinoleate. This chain is Oleate hydroxylase FAH12, found in Claviceps purpurea (Ergot fungus).